Reading from the N-terminus, the 184-residue chain is GTP cyclohydrolase 1 (184 aa).

Zn(2+) is bound by residues cysteine 75, histidine 78, and cysteine 146.

It belongs to the GTP cyclohydrolase I family. In terms of assembly, homomer.

The enzyme catalyses GTP + H2O = 7,8-dihydroneopterin 3'-triphosphate + formate + H(+). It participates in cofactor biosynthesis; 7,8-dihydroneopterin triphosphate biosynthesis; 7,8-dihydroneopterin triphosphate from GTP: step 1/1. This is GTP cyclohydrolase 1 from Streptococcus pneumoniae serotype 19F (strain G54).